The sequence spans 150 residues: uncharacterized protein (150 aa).

The protein to A.tumefaciens conjugal transfer protein TraB.

This is an uncharacterized protein from Agrobacterium tumefaciens (strain 15955).